A 919-amino-acid chain; its full sequence is Beta-galactosidase 15 (919 aa).

The signal sequence occupies residues 1-31 (MAASRGPPLLGFRALALALLLAILLLLGCSA). Asn-63 is a glycosylation site (N-linked (GlcNAc...) asparagine). Glu-220 serves as the catalytic Proton donor. The active-site Nucleophile is the Glu-289. N-linked (GlcNAc...) asparagine glycans are attached at residues Asn-412, Asn-530, Asn-546, and Asn-855. The 86-residue stretch at 822–907 (NAATPELRLQ…KDLAVEAKCS (86 aa)) folds into the SUEL-type lectin domain.

It belongs to the glycosyl hydrolase 35 family.

The protein localises to the secreted. The protein resides in the extracellular space. It localises to the apoplast. It carries out the reaction Hydrolysis of terminal non-reducing beta-D-galactose residues in beta-D-galactosides.. The protein is Beta-galactosidase 15 of Oryza sativa subsp. japonica (Rice).